We begin with the raw amino-acid sequence, 158 residues long: Cysteine proteinase inhibitor 4 (158 aa).

An N-terminal signal peptide occupies residues 1–24; sequence MAARCPVGVASVLLLIVLVTVASA. A disordered region spans residues 26–51; sequence SGARSGGGGGGGIRELRGGGAGRRVG. The span at 29–49 shows a compositional bias: gly residues; it reads RSGGGGGGGIRELRGGGAGRR. Residues 51-116 form the Cystatin domain; the sequence is GGRTEVRDVE…KYYLRVAAAE (66 aa). Positions 101-105 match the Secondary area of contact motif; the sequence is QVVSG.

This sequence belongs to the cystatin family. Phytocystatin subfamily.

It is found in the secreted. Its function is as follows. Specific inhibitor of cysteine proteinases. Probably involved in the regulation of endogenous processes and in defense against pests and pathogens. This chain is Cysteine proteinase inhibitor 4, found in Oryza sativa subsp. japonica (Rice).